The primary structure comprises 466 residues: Arginine biosynthesis bifunctional protein ArgJ, mitochondrial (466 aa).

Residues threonine 194, lysine 223, threonine 234, glutamate 321, asparagine 461, and threonine 466 each contribute to the substrate site. Threonine 234 serves as the catalytic Nucleophile.

This sequence belongs to the ArgJ family. In terms of assembly, heterodimer of an alpha and a beta chain. The alpha and beta chains are autoproteolytically processed from a single precursor protein within the mitochondrion.

It is found in the mitochondrion matrix. It carries out the reaction N(2)-acetyl-L-ornithine + L-glutamate = N-acetyl-L-glutamate + L-ornithine. The enzyme catalyses L-glutamate + acetyl-CoA = N-acetyl-L-glutamate + CoA + H(+). It functions in the pathway amino-acid biosynthesis; L-arginine biosynthesis; L-ornithine and N-acetyl-L-glutamate from L-glutamate and N(2)-acetyl-L-ornithine (cyclic): step 1/1. It participates in amino-acid biosynthesis; L-arginine biosynthesis; N(2)-acetyl-L-ornithine from L-glutamate: step 1/4. Functionally, catalyzes two activities which are involved in the cyclic version of arginine biosynthesis: the synthesis of acetylglutamate from glutamate and acetyl-CoA, and of ornithine by transacetylation between acetylornithine and glutamate. The sequence is that of Arginine biosynthesis bifunctional protein ArgJ, mitochondrial from Aspergillus flavus (strain ATCC 200026 / FGSC A1120 / IAM 13836 / NRRL 3357 / JCM 12722 / SRRC 167).